The sequence spans 506 residues: Maturase K (506 aa).

Belongs to the intron maturase 2 family. MatK subfamily.

The protein localises to the plastid. It is found in the chloroplast. Its function is as follows. Usually encoded in the trnK tRNA gene intron. Probably assists in splicing its own and other chloroplast group II introns. In Lathyrus tingitanus (Tangier pea), this protein is Maturase K.